We begin with the raw amino-acid sequence, 108 residues long: Nucleoid-associated protein IL1848 (108 aa).

2 disordered regions span residues 1–26 and 88–108; these read MFKGGMGNMMKQAQQMQERMQQAQEE and KERMSEITGGMGLPPGFKMPF. Residues 9–26 show a composition bias toward low complexity; that stretch reads MMKQAQQMQERMQQAQEE.

Belongs to the YbaB/EbfC family. As to quaternary structure, homodimer.

The protein localises to the cytoplasm. It is found in the nucleoid. Binds to DNA and alters its conformation. May be involved in regulation of gene expression, nucleoid organization and DNA protection. The polypeptide is Nucleoid-associated protein IL1848 (Idiomarina loihiensis (strain ATCC BAA-735 / DSM 15497 / L2-TR)).